Consider the following 452-residue polypeptide: Tubulin alpha-1 chain (452 aa).

Residue Q11 participates in GTP binding. K40 carries the N6-acetyllysine modification. 7 residues coordinate GTP: E71, S140, G144, T145, T179, N206, and N228. Residue E71 participates in Mg(2+) binding. Residue E254 is part of the active site. The disordered stretch occupies residues 433 to 452 (EEVGVDSADAEGEEEEGDEY).

This sequence belongs to the tubulin family. In terms of assembly, dimer of alpha and beta chains. A typical microtubule is a hollow water-filled tube with an outer diameter of 25 nm and an inner diameter of 15 nM. Alpha-beta heterodimers associate head-to-tail to form protofilaments running lengthwise along the microtubule wall with the beta-tubulin subunit facing the microtubule plus end conferring a structural polarity. Microtubules usually have 13 protofilaments but different protofilament numbers can be found in some organisms and specialized cells. Mg(2+) is required as a cofactor. Post-translationally, undergoes a tyrosination/detyrosination cycle, the cyclic removal and re-addition of a C-terminal tyrosine residue by the enzymes tubulin tyrosine carboxypeptidase (TTCP) and tubulin tyrosine ligase (TTL), respectively. Acetylation of alpha chains at Lys-40 stabilizes microtubules and affects affinity and processivity of microtubule motors. This modification has a role in multiple cellular functions, ranging from cell motility, cell cycle progression or cell differentiation to intracellular trafficking and signaling.

Its subcellular location is the cytoplasm. The protein localises to the cytoskeleton. It carries out the reaction GTP + H2O = GDP + phosphate + H(+). In terms of biological role, tubulin is the major constituent of microtubules, a cylinder consisting of laterally associated linear protofilaments composed of alpha- and beta-tubulin heterodimers. Microtubules grow by the addition of GTP-tubulin dimers to the microtubule end, where a stabilizing cap forms. Below the cap, tubulin dimers are in GDP-bound state, owing to GTPase activity of alpha-tubulin. The protein is Tubulin alpha-1 chain of Paracentrotus lividus (Common sea urchin).